We begin with the raw amino-acid sequence, 3120 residues long: MNIFFQRKLVKYFGNIKKKKHYLTVSEECNHYVFVKKTYVSSVFLKSLNKVNKTCNTNSGILYNQYSLGYINMHKQLPSLIRNKSKTIGNYGVAHPSRLVKCLVTKNATAPFFNFTFDKGRLKNLVSWTLENYGQYKTVELLEQLKKTGFEYATKAGISLGLDDLKIPPKKKILLLEAEQLTKLTIHQYQRGDITAVERFQRLIDTWHRTSEQLKQEVINYFEETDILNPVYMMAFSGARGNISQVRQLVGMRGLMSDPQGQIIDFPIQSNFREGLTLTEYIISSYGARKGIVDTALRTANAGYLTRRLVDVAQHVIISHYDCGTHKGIFLTDMKEGNKTIVSAQSRIIGRVLARDIYKPNSTITIAKRNQEISTDVAFEIGKVTNRIFVRSALTCNTTKLLCQLCYGWSLAQGNLVSVGEAVGVIAAQSIGEPGTQLTMRTFHTGGVFSGDVSDEIRAPYNGFVYYDNKIPGILIRTLDGKILFLTKSEGTLIFTADPNFNKPQALTDSFLNSGHGEKEKYEIKKYKIPAYTLLFIRNGESVLQKQVLAQITMISTKPNMRDTAELVIKAELEGLFYAKNLQVQKKILGPKPKFIGEGKQNVLLDPKAMEIIVKARGWNFAWVLSGKRYEFPLLLKSFASSGDLITPNTIMAKHNLQLSSPFLNVGTALQVGNSTDIPKLPLLGATSKFRAMSGVLTSSIVRRYPTKINSSSRPKVNQFGKSNLFYTQVLQNKVNALNGEVDSYSETAKLPYWKNLNLKFVQKLNLSKFFKQYNLKNKTKTKLAFYSLVQANALQASKLDSFKANTFQSKQLGRPIFIYRHCLLTKESNKKTVKLIHNIQLQQSVLFLKIKKIKFYKMGYFQLVNSNKTAFLVSLSHNKNRLTLYHNKFNYNNSYNDIIVLPTSLTQDISSKKQIALKRFKPAYNLFQWFYPSLIKPSSKEAQNLTVQQVEFFNAREQMHFNSRYSKTDFVQLLQNPFKLDFNKALHRPLCISESYKEIPTGEVSISPQNSVNLPMNTFFNTDGVPDKKPNYTNMYAFWLKQQVLKSYKKRYKKYKLTSILKSHLSDKIYLPASVELQHQSQQNNLLSLTKEFKALNSSKYLKNNQLQSRPLLYKQEKLLKTLVLKKWFKSNLLYVNSAISKEENMDGSSTQMSAHSLPKRQRKGAKVSKINRFLKIDNYIKQLTYFKTSKIMRIKHSFNSLRVDFKFTSSKLVCPKRKRNLQIVCTLRGEEQTSVRESSVTHVNNLICSSKYKRSIRLQNDSHLFTTTKKAKVPFTGYSDSHQAGKVLQSSQISSTKPKTQSSFTFFEYFKLKLAQSGTKAILKHFKSLKAVNISKVSMDQSRNKGFNNWGKSSSECLNTSLGDKQALYFKTKTEANLQLLTLVLENFYRKKQFANLLAKNLTILNKNLKLKKNHVHFLLYYYNKLSVQKPNAIFLLTHMLAKANKIQISYSYVVPTSPKSKLNLDRGNLTTTNQKNVASLGGYQPRSAGTKYYSEGIRNRTRKNNKSSMTKITKIFNQLKLDTQFVIILLSPHKLLHHSHQLPQNTLGIYDKFNSNFEMAKVTLLTHPLWFNQFQMKSIKEVGNKFINTRNNSLLENYVILLLSNNYVFNFLSIKSEQINLPEEQESNLSLQEYKSPANCQEKALPSDNKKIIFDLKKLQHIVLTEQYKNNLRWVKNKKPRFLPKDIDINTLEVNLDRIKPKNKLSNLNPTQQLQLSNSLLEFVKTIKINPTDLAKVYSGSANTVMSIENCQPSLEVSNTFFLKTQKLLKLINKTKHSIALNQTKFINTSLLKGHLVAYARPVFIITNKAEPFIAKQKKDLLLLPKNATINVLIKPQQEKNSLNKAIFPLGGNAANNHSIFVSPNTNKLANPNVSYLKKHIYFNQMPFFDSPFRNASYLFSYTENSIKPLTKVDFMHSFAQKNHKLLPESEREKRLQFKALHIPKQPCLNICFKSNSNLIFNSKTTNSLVIRKTTTNYKYNIDLSEGVDFKKLKTNMFSARKCNNFKLDTALESKLFKGRPTLLNYKNVVTQTNYFSPFEGELLATKTYKNYLDLNPYQSLKVGLMQLNTSSALATLVPKTKRAGNKSSKQKIKLNQGELSTELGSTIPQSGKHKTKTEKMRMAMFKYYLKTINSQKIIGNKGWSRFNLILTKKDFITLKYNNTLYPNFTIFSEIQKHWQPRIQMTKPIRPISYDEVCLNYLFSEEITNQVKLQTLAKLNKEIHFNKSYHFNLKNRWLKQKLVINASTSKSTSSLLTNIHMDQGEDKKTSVGVSLKLPAIYLCEEEGLHTNLFIHKAQRLLYKIKIILSEKALNVEHYSWNKNSSLQKTFGYQNGIIQAKSLLHTLPTNLNYNLKWINYKQKNIFTTNKVGFFFLKGNTFFNTSQKLFNKKITKQTTFLNATIYNFGRNNKNNLISYNNSNFLENTHFVDLSLCLELQKIYLNKNYLNLKPILDKTIHCQKPTKVLFKKSGFSKKQHYYLEFLNTKNHRRLIGLKEFNDYHMSYSKSQTKEMSNFIDSYYFVKPINMDCAHYIKHELVLYNDLITHFASLNLYISREHGLKSLSAFFINILKIFITSNQSQISLAPIGIDKYTNIYIPEGEGEKDMTKNVFQVIKKSGQLIQMNKEKMTLRLGQPLVISPRSTIHATHGDFIRYKTPVVTLTYQQLKTGDIVQGIPKIEQLFEARTTKRGRLFRDNVTNLLTGLFLKYFIKSTYLLRKTMIGFSKKRWKKSIKYTLPVNKQPNMPRVNHTLNTTVGTELGRQSKTKVDKNKHSIAINKNLNYSNFINNKQNQTIILALALQWAVKQSFYKIQQIIVDGILRVYRSQGVSIADKHVEIVVKQMTSKVRIINSNASKMSEYMFSLDTIKAGEMPETDLPEEEVSLQQNKAVSKQNVVAQTGKKRKKRLRKSKLSERDVITTKRTEGIDSSKIPSSNIPEGKVTQNNKRKSTRKNVSLADRELKTRNTLSNTTKPIQISQVFEHKVLNQLLSNNLDGPTGLFPGEIVDIDFVENINTFLLKTASVDRASRETLSTDPLNPNNQVAFAIEPIKYEPIVLGITRASLEVESFLSAASFQQTTRVLSQAALYKKKDFLKGLKENIIIGNLIPAGTGFLSSLNI.

Zn(2+) contacts are provided by Cys-323, Cys-396, Cys-403, and Cys-406. Residues 595 to 1130 form an insert-1 region; the sequence is FIGEGKQNVL…LKTLVLKKWF (536 aa). Residues 1796–2346 form an insert-2 region; that stretch reads KGHLVAYARP…NGIIQAKSLL (551 aa). The insert-3 stretch occupies residues 2422-2610; sequence NSNFLENTHF…PEGEGEKDMT (189 aa). Residues 2726-2801 form an insert-4 region; that stretch reads FSKKRWKKSI…KQNQTIILAL (76 aa). Residues 2856-2996 form an insert-5 region; sequence ASKMSEYMFS…LNQLLSNNLD (141 aa). The tract at residues 2926-2956 is disordered; the sequence is EGIDSSKIPSSNIPEGKVTQNNKRKSTRKNV. Polar residues predominate over residues 2932-2946; that stretch reads KIPSSNIPEGKVTQN.

This sequence belongs to the RNA polymerase beta' chain family. RpoC2 subfamily. In plastids the minimal PEP RNA polymerase catalytic core is composed of four subunits: alpha, beta, beta', and beta''. When a (nuclear-encoded) sigma factor is associated with the core the holoenzyme is formed, which can initiate transcription. Requires Zn(2+) as cofactor.

The protein localises to the plastid. It localises to the chloroplast. The enzyme catalyses RNA(n) + a ribonucleoside 5'-triphosphate = RNA(n+1) + diphosphate. Functionally, DNA-dependent RNA polymerase catalyzes the transcription of DNA into RNA using the four ribonucleoside triphosphates as substrates. This Chlamydomonas reinhardtii (Chlamydomonas smithii) protein is DNA-directed RNA polymerase subunit beta''.